A 487-amino-acid polypeptide reads, in one-letter code: 3-octaprenyl-4-hydroxybenzoate carboxy-lyase (487 aa).

Residue Asn172 participates in Mn(2+) binding. Prenylated FMN-binding positions include 175–177, 189–191, and 194–195; these read IYR, RWL, and RG. Glu238 serves as a coordination point for Mn(2+). Catalysis depends on Asp287, which acts as the Proton donor.

The protein belongs to the UbiD family. As to quaternary structure, homohexamer. Prenylated FMN serves as cofactor. Requires Mn(2+) as cofactor.

It localises to the cell membrane. The enzyme catalyses a 4-hydroxy-3-(all-trans-polyprenyl)benzoate + H(+) = a 2-(all-trans-polyprenyl)phenol + CO2. It participates in cofactor biosynthesis; ubiquinone biosynthesis. Its function is as follows. Catalyzes the decarboxylation of 3-octaprenyl-4-hydroxy benzoate to 2-octaprenylphenol, an intermediate step in ubiquinone biosynthesis. The polypeptide is 3-octaprenyl-4-hydroxybenzoate carboxy-lyase (Dechloromonas aromatica (strain RCB)).